A 462-amino-acid chain; its full sequence is Elongation factor 1-alpha 1 (462 aa).

A N,N,N-trimethylglycine modification is found at Gly-2. In terms of domain architecture, tr-type G spans 5 to 242 (KTHINIVVIG…DCILPPTRPT (238 aa)). A G1 region spans residues 14-21 (GHVDSGKS). 14–21 (GHVDSGKS) is a GTP binding site. Residue Lys-36 is modified to N6,N6,N6-trimethyllysine; alternate. Lys-36 carries the post-translational modification N6,N6-dimethyllysine; alternate. Residue Lys-36 is modified to N6-methyllysine; alternate. Lys-55 is modified (N6,N6-dimethyllysine). The tract at residues 70–74 (GITID) is G2. Lys-79 carries the post-translational modification N6,N6,N6-trimethyllysine; by EEF1AKMT1. The interval 91 to 94 (DAPG) is G3. 153–156 (NKMD) contacts GTP. The tract at residues 153-156 (NKMD) is G4. Position 165 is an N6,N6,N6-trimethyllysine; alternate; by EEF1AKMT3 (Lys-165). Lys-165 carries the N6,N6-dimethyllysine; alternate; by EEF1AKMT3 modification. Position 165 is an N6-acetyllysine; alternate (Lys-165). At Lys-165 the chain carries N6-methyllysine; alternate; by EEF1AKMT3. The residue at position 172 (Lys-172) is an N6-acetyllysine. 194-196 (SGW) serves as a coordination point for GTP. The G5 stretch occupies residues 194-196 (SGW). Position 273 is an N6-acetyllysine (Lys-273). Residue Ser-300 is modified to Phosphoserine; by TGFBR1. A 5-glutamyl glycerylphosphorylethanolamine modification is found at Glu-301. Residue Lys-318 is modified to N6,N6,N6-trimethyllysine; by EEF1AKMT2. Glu-374 bears the 5-glutamyl glycerylphosphorylethanolamine mark. A Glycyl lysine isopeptide (Lys-Gly) (interchain with G-Cter in ubiquitin) cross-link involves residue Lys-385. N6-acetyllysine; alternate is present on Lys-392. An N6-succinyllysine; alternate modification is found at Lys-392. Thr-432 is subject to Phosphothreonine; by PASK. Lys-439 carries the post-translational modification N6-acetyllysine.

The protein belongs to the TRAFAC class translation factor GTPase superfamily. Classic translation factor GTPase family. EF-Tu/EF-1A subfamily. As to quaternary structure, found in a nuclear export complex with XPO5, EEF1A1, Ran and aminoacylated tRNA. Interacts with PARP1 and TXK. Interacts with KARS1. May interact with ERGIC2. Interacts with IFIT1 (via TPR repeats 4-7). Interacts with DLC1, facilitating distribution to the membrane periphery and ruffles upon growth factor stimulation. Interacts with ZPR1; the interaction occurs in a epidermal growth factor (EGF)-dependent manner. Interacts with PPP1R16B. Interacts with SPHK1 and SPHK2; both interactions increase SPHK1 and SPHK2 kinase activity. Interacts with guanyl-nucleotide exchange factor EEF1B2. Interacts (via middle-region) with HTATIP2 (via N-terminus); the interaction is direct and competes with EEF1A1 binding to guanyl-nucleotide exchange factor EEF1B2, thereby inhibiting GDP for GTP exchange and reactivation of EEF1A1. Interacts with tRNA. In terms of processing, ISGylated. Phosphorylated by TXK. Phosphorylation by PASK increases translation efficiency. Phosphorylated by ROCK2. Phosphorylation by TGFBR1 inhibits translation elongation. Post-translationally, trimethylated at Lys-79 by EEF1AKMT1. Methylated at Lys-165 by EEF1AKMT3, methylation by EEF1AKMT3 is dynamic as well as inducible by stress conditions, such as ER-stress, and plays a regulatory role on mRNA translation. Trimethylated at Lys-318 by EEF1AKMT2. Mono-, di-, and trimethylated at Lys-36 by EEF1AKMT4; trimethylated form is predominant. Methylation by EEF1AKMT4 contributes to the fine-tuning of translation rates for a subset of tRNAs. Trimethylated at Gly-2 by METTL13. Mono- and dimethylated at Lys-55 by METTL13; dimethylated form is predominant. In terms of processing, ubiquitinated at Lys-385 by RNF14 in response to ribosome collisions (ribosome stalling), leading to its degradation by the proteasome and rescue of stalled ribosomes.

It localises to the cytoplasm. Its subcellular location is the nucleus. It is found in the nucleolus. The protein localises to the cell membrane. The catalysed reaction is GTP + H2O = GDP + phosphate + H(+). In terms of biological role, translation elongation factor that catalyzes the GTP-dependent binding of aminoacyl-tRNA (aa-tRNA) to the A-site of ribosomes during the elongation phase of protein synthesis. Base pairing between the mRNA codon and the aa-tRNA anticodon promotes GTP hydrolysis, releasing the aa-tRNA from EEF1A1 and allowing its accommodation into the ribosome. The growing protein chain is subsequently transferred from the P-site peptidyl tRNA to the A-site aa-tRNA, extending it by one amino acid through ribosome-catalyzed peptide bond formation. Also plays a role in the positive regulation of IFNG transcription in T-helper 1 cells as part of an IFNG promoter-binding complex with TXK and PARP1. Also plays a role in cytoskeleton organization by promoting actin bundling. This is Elongation factor 1-alpha 1 (EEF1A1) from Cricetulus griseus (Chinese hamster).